A 477-amino-acid chain; its full sequence is Protoporphyrinogen oxidase (477 aa).

Residues glycine 9–glycine 14, tryptophan 42, glycine 57–glycine 60, valine 257, alanine 449, and valine 454–valine 456 contribute to the FAD site.

It belongs to the protoporphyrinogen/coproporphyrinogen oxidase family. Protoporphyrinogen oxidase subfamily. As to quaternary structure, monomer. Homodimer. The cofactor is FAD. Detected in liver (at protein level).

The protein localises to the mitochondrion inner membrane. It catalyses the reaction protoporphyrinogen IX + 3 O2 = protoporphyrin IX + 3 H2O2. It participates in porphyrin-containing compound metabolism; protoporphyrin-IX biosynthesis; protoporphyrin-IX from protoporphyrinogen-IX: step 1/1. Functionally, catalyzes the 6-electron oxidation of protoporphyrinogen-IX to form protoporphyrin-IX. This chain is Protoporphyrinogen oxidase (PPOX), found in Bos taurus (Bovine).